Reading from the N-terminus, the 184-residue chain is MANQIYIISLIFLSVLLYQSTTVLSFRQPFNLAKPCKRFVFYLHNVAYDGDNTDNATSAAIVNPLGLGDFSFGKFVIMDNPVTMDQNMLSEQVARVQGFFFYHGKTKYDTWLSWSVVFNSTQHKGALNIMGENAFMEPTRDLPVVGGTGDFVMTRGIATFMTDLVEGSKYFRVKMDIKLYECYY.

Positions 1-25 (MANQIYIISLIFLSVLLYQSTTVLS) are cleaved as a signal peptide. The cysteines at positions 36 and 182 are disulfide-linked. N-linked (GlcNAc...) asparagine glycosylation is found at Asn-55 and Asn-119.

This sequence belongs to the plant dirigent protein family. In terms of assembly, homodimer. In terms of tissue distribution, expressed in root vasculature and meristems, cotyledons, flowers, siliques, and leaf trichomes. Localized in the interfascicular/vascular cambia and developing xylem.

The protein localises to the secreted. It localises to the extracellular space. Its subcellular location is the apoplast. Functionally, dirigent proteins impart stereoselectivity on the phenoxy radical-coupling reaction, yielding optically active lignans from two molecules of coniferyl alcohol in the biosynthesis of lignans, flavonolignans, and alkaloids and thus plays a central role in plant secondary metabolism. This is Dirigent protein 13 (DIR13) from Arabidopsis thaliana (Mouse-ear cress).